The sequence spans 1181 residues: WD repeat-containing protein 35 (1181 aa).

5 WD repeats span residues 12–51 (PNNV…DDSK), 69–108 (GHSG…WYEE), 113–152 (RNKS…IWGK), 154–193 (LKGI…IMKM), and 502–539 (GTRD…LIQK).

Component of the IFT complex A (IFT-A) complex. IFT-A complex is divided into a core subcomplex composed of IFT122:IFT140:WDR19 which is associated with TULP3 and a peripheral subcomplex composed of IFT43:WDR35:TTC21B. Interacts directy with IFT122, ITF43 and TTC21B. Interacts with IFT43. Interacts with CFAP61.

The protein resides in the cytoplasm. It is found in the cytoskeleton. The protein localises to the microtubule organizing center. Its subcellular location is the centrosome. It localises to the cilium axoneme. The protein resides in the cilium basal body. Functionally, as a component of the IFT complex A (IFT-A), a complex required for retrograde ciliary transport and entry into cilia of G protein-coupled receptors (GPCRs), it is involved in ciliogenesis and ciliary protein trafficking. May promote CASP3 activation and TNF-stimulated apoptosis. The sequence is that of WD repeat-containing protein 35 from Mus musculus (Mouse).